The following is a 96-amino-acid chain: Co-chaperonin GroES (96 aa).

This sequence belongs to the GroES chaperonin family. As to quaternary structure, heptamer of 7 subunits arranged in a ring. Interacts with the chaperonin GroEL.

Its subcellular location is the cytoplasm. Its function is as follows. Together with the chaperonin GroEL, plays an essential role in assisting protein folding. The GroEL-GroES system forms a nano-cage that allows encapsulation of the non-native substrate proteins and provides a physical environment optimized to promote and accelerate protein folding. GroES binds to the apical surface of the GroEL ring, thereby capping the opening of the GroEL channel. The protein is Co-chaperonin GroES of Holospora obtusa.